The sequence spans 439 residues: Trigger factor (439 aa).

Residues 175-260 form the PPIase FKBP-type domain; sequence GDRVTISYRS…VERLSVKDEI (86 aa).

It belongs to the FKBP-type PPIase family. Tig subfamily.

It localises to the cytoplasm. It catalyses the reaction [protein]-peptidylproline (omega=180) = [protein]-peptidylproline (omega=0). Its function is as follows. Involved in protein export. Acts as a chaperone by maintaining the newly synthesized protein in an open conformation. Functions as a peptidyl-prolyl cis-trans isomerase. The sequence is that of Trigger factor from Anaplasma phagocytophilum (strain HZ).